Here is a 200-residue protein sequence, read N- to C-terminus: Glycerol-3-phosphate acyltransferase (200 aa).

The next 5 membrane-spanning stretches (helical) occupy residues 2-22 (FNIP…AVIV), 51-71 (KAAA…VLLA), 84-104 (AIAA…FFGF), 114-134 (LGVL…IWLV), and 159-179 (FFMP…LVLF).

Belongs to the PlsY family. As to quaternary structure, probably interacts with PlsX.

The protein localises to the cell inner membrane. The catalysed reaction is an acyl phosphate + sn-glycerol 3-phosphate = a 1-acyl-sn-glycero-3-phosphate + phosphate. It participates in lipid metabolism; phospholipid metabolism. In terms of biological role, catalyzes the transfer of an acyl group from acyl-phosphate (acyl-PO(4)) to glycerol-3-phosphate (G3P) to form lysophosphatidic acid (LPA). This enzyme utilizes acyl-phosphate as fatty acyl donor, but not acyl-CoA or acyl-ACP. This Neisseria meningitidis serogroup B (strain ATCC BAA-335 / MC58) protein is Glycerol-3-phosphate acyltransferase.